We begin with the raw amino-acid sequence, 337 residues long: MNTQQRFALTPGEPAGIGPDLCLLLAREAQPVPLVAIASLALLAERAQQLGLAIELLEVGPEQWPDSPAAAGSLYVWDTPLAVPAHAGRLDPANAGYVLETLTRAGQGCLDGTFAAMITAPVHKGVINEAGIAFSGHTEFLAELTATEQVVMMLATRGLRVALVTTHLPLKDVAAAITAERLQRVTRILHADLQAKFGIAAPRILVCGLNPHAGEGGHLGREEIEIIEPTLERLRAEGMNLIGPLPADTLFTPKHLEHADAVLAMYHDQGLPVLKFKGFGAALNVTLGLPIIRTSVDHGTALDLAGSGNIDTGSLQVALETAYQMAAATSGKSQAAG.

Positions 137 and 138 each coordinate substrate. 3 residues coordinate a divalent metal cation: histidine 167, histidine 212, and histidine 267. 3 residues coordinate substrate: lysine 275, asparagine 284, and arginine 293.

It belongs to the PdxA family. As to quaternary structure, homodimer. The cofactor is Zn(2+). Mg(2+) is required as a cofactor. Requires Co(2+) as cofactor.

The protein resides in the cytoplasm. The catalysed reaction is 4-(phosphooxy)-L-threonine + NAD(+) = 3-amino-2-oxopropyl phosphate + CO2 + NADH. Its pathway is cofactor biosynthesis; pyridoxine 5'-phosphate biosynthesis; pyridoxine 5'-phosphate from D-erythrose 4-phosphate: step 4/5. Catalyzes the NAD(P)-dependent oxidation of 4-(phosphooxy)-L-threonine (HTP) into 2-amino-3-oxo-4-(phosphooxy)butyric acid which spontaneously decarboxylates to form 3-amino-2-oxopropyl phosphate (AHAP). The protein is 4-hydroxythreonine-4-phosphate dehydrogenase of Ectopseudomonas mendocina (strain ymp) (Pseudomonas mendocina).